Reading from the N-terminus, the 529-residue chain is Beta-galactoside alpha-2,6-sialyltransferase 2 (529 aa).

Residues 1–11 are Cytoplasmic-facing; the sequence is MKPHLKQWRQR. A helical; Signal-anchor for type II membrane protein transmembrane segment spans residues 12–32; it reads MLFGLFAGGLLFLLIFIYFTD. The Lumenal portion of the chain corresponds to 33–529; it reads SNPAEPVPSS…PAPSPVIPHS (497 aa). The interval 142–186 is disordered; the sequence is SHSQGTLGFPSPGEPGPREGAFPAAQVQRRRVKKRHRRQRRSHVL. Basic residues predominate over residues 169-183; it reads QRRRVKKRHRRQRRS. N211 carries N-linked (GlcNAc...) asparagine glycosylation. 3 cysteine pairs are disulfide-bonded: C253-C519, C296-C448, and C466-C477.

This sequence belongs to the glycosyltransferase 29 family.

Its subcellular location is the golgi apparatus. It localises to the golgi stack membrane. It carries out the reaction a beta-D-galactoside + CMP-N-acetyl-beta-neuraminate = an N-acetyl-alpha-neuraminyl-(2-&gt;6)-beta-D-galactosyl derivative + CMP + H(+). In terms of biological role, transfers sialic acid from the donor of substrate CMP-sialic acid to galactose containing acceptor substrates. Has alpha-2,6-sialyltransferase activity toward oligosaccharides that have the Gal-beta-1,4-GlcNAc sequence at the non-reducing end of their carbohydrate groups, but it has weak or no activities toward glycoproteins and glycolipids. The protein is Beta-galactoside alpha-2,6-sialyltransferase 2 (ST6GAL2) of Pan troglodytes (Chimpanzee).